The primary structure comprises 92 residues: Actobindin-A (92 aa).

Disordered stretches follow at residues 1-33 and 54-92; these read MSAP…IGSD and LKHA…AADS. 2 WH2 domains span residues 3-20 and 40-57; these read APNP…LKHT and DHAS…LKHA. Composition is skewed to basic and acidic residues over residues 13-33 and 54-64; these read KGAD…IGSD and LKHAETDDKSA. Over residues 68–79 the composition is skewed to polar residues; that stretch reads NENTTIKPNNHS.

Monomer.

Is able to bind two actin monomers at high concentrations of G-actin. Inhibits actin polymerization by sequestering G-actin and stabilizing actin dimers. This Dictyostelium discoideum (Social amoeba) protein is Actobindin-A (abnA).